The sequence spans 236 residues: Ribose-5-phosphate isomerase A (236 aa).

Substrate contacts are provided by residues 28–31 (TGST), 83–86 (DGAD), and 96–99 (KGGG). Residue Glu105 is the Proton acceptor of the active site. Lys123 serves as a coordination point for substrate.

The protein belongs to the ribose 5-phosphate isomerase family. Homodimer.

The enzyme catalyses aldehydo-D-ribose 5-phosphate = D-ribulose 5-phosphate. Its pathway is carbohydrate degradation; pentose phosphate pathway; D-ribose 5-phosphate from D-ribulose 5-phosphate (non-oxidative stage): step 1/1. Functionally, catalyzes the reversible conversion of ribose-5-phosphate to ribulose 5-phosphate. The sequence is that of Ribose-5-phosphate isomerase A from Afipia carboxidovorans (strain ATCC 49405 / DSM 1227 / KCTC 32145 / OM5) (Oligotropha carboxidovorans).